Consider the following 54-residue polypeptide: MSNGTAVMGKINNKKTHIRCRRCGHHTYNVRTKRCSHCGFPAPRIRSYRWAKAK.

Residues Cys20, Cys23, Cys35, and Cys38 each coordinate Zn(2+). The C4-type zinc finger occupies 20–38 (CRRCGHHTYNVRTKRCSHC).

This sequence belongs to the eukaryotic ribosomal protein eL37 family. Zn(2+) is required as a cofactor.

In terms of biological role, binds to the 23S rRNA. In Thermoplasma acidophilum (strain ATCC 25905 / DSM 1728 / JCM 9062 / NBRC 15155 / AMRC-C165), this protein is Large ribosomal subunit protein eL37 (rpl37e).